A 513-amino-acid polypeptide reads, in one-letter code: Histidine ammonia-lyase (513 aa).

The 5-imidazolinone (Ala-Gly) cross-link spans 145–147; that stretch reads ASG. Ser146 bears the 2,3-didehydroalanine (Ser) mark.

The protein belongs to the PAL/histidase family. Post-translationally, contains an active site 4-methylidene-imidazol-5-one (MIO), which is formed autocatalytically by cyclization and dehydration of residues Ala-Ser-Gly.

It is found in the cytoplasm. The catalysed reaction is L-histidine = trans-urocanate + NH4(+). The protein operates within amino-acid degradation; L-histidine degradation into L-glutamate; N-formimidoyl-L-glutamate from L-histidine: step 1/3. This Vibrio vulnificus (strain CMCP6) protein is Histidine ammonia-lyase.